The following is a 167-amino-acid chain: MIIYKDIFSNDELLSDAYDAKLVDDVIYEADCAMVNVGGDNIDIGANPSAEGGDDDVEEGAEMVNNVVHSFRLQQTAFDKKSFLTYIKGYMKAVKAKLQETNPEEVPKFEKGAQTYVKKVIGSFKDWEFFTGESMDPDAMVVMLNYREDGTTPFVAIWKHGIVEEKI.

Residues 1 to 167 (MIIYKDIFSN…WKHGIVEEKI (167 aa)) form the TCTP domain. Serine 9 and serine 15 each carry phosphoserine.

This sequence belongs to the TCTP family. As to quaternary structure, interacts with the 40S and 60S ribosomal subunits. Interacts with microtubules.

The protein resides in the cytoplasm. It localises to the cytoskeleton. Its subcellular location is the mitochondrion. Its function is as follows. Involved in protein synthesis. Involved in microtubule stabilization. The chain is Translationally-controlled tumor protein homolog (TMA19) from Saccharomyces cerevisiae (strain ATCC 204508 / S288c) (Baker's yeast).